Reading from the N-terminus, the 317-residue chain is Putative 12-oxophytodienoate reductase 10 (317 aa).

An FMN-binding site is contributed by 26 to 28 (PVG). Residue 117 to 120 (HGAN) participates in substrate binding. The Proton donor role is filled by Tyr-122. Arg-169 serves as a coordination point for FMN. Arg-209 provides a ligand contact to substrate. FMN contacts are provided by residues Gly-244 and 265 to 266 (GR).

The protein belongs to the NADH:flavin oxidoreductase/NADH oxidase family. It depends on FMN as a cofactor.

In terms of biological role, putative oxophytodienoate reductase that may be involved in the biosynthesis or metabolism of oxylipin signaling molecules. In Oryza sativa subsp. japonica (Rice), this protein is Putative 12-oxophytodienoate reductase 10 (OPR10).